We begin with the raw amino-acid sequence, 252 residues long: ATP synthase subunit a (252 aa).

The next 7 membrane-spanning stretches (helical) occupy residues L6–F26, L31–G51, F88–I108, H117–F137, F144–L164, L190–Q212, and L225–L245.

Belongs to the ATPase A chain family. As to quaternary structure, F-type ATPases have 2 components, CF(1) - the catalytic core - and CF(0) - the membrane proton channel. CF(1) has five subunits: alpha(3), beta(3), gamma(1), delta(1), epsilon(1). CF(0) has three main subunits: a, b and c.

It is found in the mitochondrion inner membrane. Functionally, mitochondrial membrane ATP synthase (F(1)F(0) ATP synthase or Complex V) produces ATP from ADP in the presence of a proton gradient across the membrane which is generated by electron transport complexes of the respiratory chain. F-type ATPases consist of two structural domains, F(1) - containing the extramembraneous catalytic core and F(0) - containing the membrane proton channel, linked together by a central stalk and a peripheral stalk. During catalysis, ATP synthesis in the catalytic domain of F(1) is coupled via a rotary mechanism of the central stalk subunits to proton translocation. Key component of the proton channel; it may play a direct role in the translocation of protons across the membrane. The sequence is that of ATP synthase subunit a (ATP6) from Marchantia polymorpha (Common liverwort).